Reading from the N-terminus, the 301-residue chain is tRNA dimethylallyltransferase (301 aa).

8-15 (GPTAVGKT) contacts ATP. 10–15 (TAVGKT) lines the substrate pocket. The tract at residues 33 to 36 (DSRQ) is interaction with substrate tRNA.

Belongs to the IPP transferase family. Monomer. Requires Mg(2+) as cofactor.

The enzyme catalyses adenosine(37) in tRNA + dimethylallyl diphosphate = N(6)-dimethylallyladenosine(37) in tRNA + diphosphate. Catalyzes the transfer of a dimethylallyl group onto the adenine at position 37 in tRNAs that read codons beginning with uridine, leading to the formation of N6-(dimethylallyl)adenosine (i(6)A). This Thermosipho africanus (strain TCF52B) protein is tRNA dimethylallyltransferase.